The sequence spans 100 residues: MNLTPREKDKLLISMAAMVARRRLERGVKLNHPEAIALITDFVVEGARDGRSVAELMEAGAHVLTRDQVMEGIAEMIHDIQIEATFPDGTKLVTVHEPIR.

Belongs to the urease gamma subunit family. As to quaternary structure, heterotrimer of UreA (gamma), UreB (beta) and UreC (alpha) subunits. Three heterotrimers associate to form the active enzyme.

Its subcellular location is the cytoplasm. It catalyses the reaction urea + 2 H2O + H(+) = hydrogencarbonate + 2 NH4(+). It participates in nitrogen metabolism; urea degradation; CO(2) and NH(3) from urea (urease route): step 1/1. The protein is Urease subunit gamma of Sinorhizobium fredii (strain NBRC 101917 / NGR234).